Here is a 664-residue protein sequence, read N- to C-terminus: DNA primase (664 aa).

The CHC2-type zinc-finger motif lies at 40-64; the sequence is CPFHKEKTPSFTVSPDKQFYYCFGC. Positions 94-104 are enriched in basic and acidic residues; sequence GMDVPREERGG. The segment at 94-115 is disordered; it reads GMDVPREERGGRGHTPRQPTDS. The region spanning 262 to 344 is the Toprim domain; the sequence is DEIMVVEGYM…GKRVRFLFLP (83 aa). Positions 268, 312, and 314 each coordinate Mg(2+). Residues 483 to 521 form a disordered region; the sequence is PRKSWNKDKKPWDGKKWDGKKKWDKGGRGDFKAPQRTPV. A compositionally biased stretch (basic and acidic residues) spans 487-515; that stretch reads WNKDKKPWDGKKWDGKKKWDKGGRGDFKA.

This sequence belongs to the DnaG primase family. As to quaternary structure, monomer. Interacts with DnaB. Zn(2+) is required as a cofactor. Requires Mg(2+) as cofactor.

It catalyses the reaction ssDNA + n NTP = ssDNA/pppN(pN)n-1 hybrid + (n-1) diphosphate.. Its function is as follows. RNA polymerase that catalyzes the synthesis of short RNA molecules used as primers for DNA polymerase during DNA replication. This is DNA primase from Pseudomonas aeruginosa (strain ATCC 15692 / DSM 22644 / CIP 104116 / JCM 14847 / LMG 12228 / 1C / PRS 101 / PAO1).